A 309-amino-acid chain; its full sequence is Glutaminase (309 aa).

7 residues coordinate substrate: Ser64, Asn114, Glu160, Asn167, Tyr191, Tyr243, and Val261.

The protein belongs to the glutaminase family. Homotetramer.

The enzyme catalyses L-glutamine + H2O = L-glutamate + NH4(+). In Rhodopseudomonas palustris (strain BisB18), this protein is Glutaminase.